The chain runs to 723 residues: Polyribonucleotide nucleotidyltransferase (723 aa).

2 residues coordinate Mg(2+): aspartate 487 and aspartate 493. A KH domain is found at 554-613; sequence PKILIMHINPDKIREVIGPSGKQINKIIDETGVKIDIEQDGTIFISSVDEAANQKAKQII. Positions 623–691 constitute an S1 motif domain; it reads GQVYLGKVKR…KQGRVNLSRK (69 aa). The tract at residues 702 to 723 is disordered; sequence GELPRESREKRGRRPERHRMKP. Basic residues predominate over residues 711–723; that stretch reads KRGRRPERHRMKP.

Belongs to the polyribonucleotide nucleotidyltransferase family. Mg(2+) serves as cofactor.

It is found in the cytoplasm. It carries out the reaction RNA(n+1) + phosphate = RNA(n) + a ribonucleoside 5'-diphosphate. In terms of biological role, involved in mRNA degradation. Catalyzes the phosphorolysis of single-stranded polyribonucleotides processively in the 3'- to 5'-direction. This Geobacillus kaustophilus (strain HTA426) protein is Polyribonucleotide nucleotidyltransferase.